A 457-amino-acid chain; its full sequence is Methylenetetrahydrofolate--tRNA-(uracil-5-)-methyltransferase TrmFO (457 aa).

Residue 8–13 (GGGLAG) coordinates FAD.

Belongs to the MnmG family. TrmFO subfamily. FAD serves as cofactor.

It localises to the cytoplasm. It catalyses the reaction uridine(54) in tRNA + (6R)-5,10-methylene-5,6,7,8-tetrahydrofolate + NADH + H(+) = 5-methyluridine(54) in tRNA + (6S)-5,6,7,8-tetrahydrofolate + NAD(+). It carries out the reaction uridine(54) in tRNA + (6R)-5,10-methylene-5,6,7,8-tetrahydrofolate + NADPH + H(+) = 5-methyluridine(54) in tRNA + (6S)-5,6,7,8-tetrahydrofolate + NADP(+). Catalyzes the folate-dependent formation of 5-methyl-uridine at position 54 (M-5-U54) in all tRNAs. This chain is Methylenetetrahydrofolate--tRNA-(uracil-5-)-methyltransferase TrmFO, found in Thermosynechococcus vestitus (strain NIES-2133 / IAM M-273 / BP-1).